Consider the following 157-residue polypeptide: 2-C-methyl-D-erythritol 2,4-cyclodiphosphate synthase (157 aa).

Residues D8 and H10 each coordinate a divalent metal cation. 4-CDP-2-C-methyl-D-erythritol 2-phosphate-binding positions include 8 to 10 (DVH) and 34 to 35 (HS). H42 provides a ligand contact to a divalent metal cation. 4-CDP-2-C-methyl-D-erythritol 2-phosphate is bound by residues 56-58 (DIG), 61-65 (FPDTD), 100-106 (AQAPKMA), 132-135 (TTTE), F139, and R142.

This sequence belongs to the IspF family. As to quaternary structure, homotrimer. The cofactor is a divalent metal cation.

The enzyme catalyses 4-CDP-2-C-methyl-D-erythritol 2-phosphate = 2-C-methyl-D-erythritol 2,4-cyclic diphosphate + CMP. The protein operates within isoprenoid biosynthesis; isopentenyl diphosphate biosynthesis via DXP pathway; isopentenyl diphosphate from 1-deoxy-D-xylulose 5-phosphate: step 4/6. Involved in the biosynthesis of isopentenyl diphosphate (IPP) and dimethylallyl diphosphate (DMAPP), two major building blocks of isoprenoid compounds. Catalyzes the conversion of 4-diphosphocytidyl-2-C-methyl-D-erythritol 2-phosphate (CDP-ME2P) to 2-C-methyl-D-erythritol 2,4-cyclodiphosphate (ME-CPP) with a corresponding release of cytidine 5-monophosphate (CMP). In Pseudomonas paraeruginosa (strain DSM 24068 / PA7) (Pseudomonas aeruginosa (strain PA7)), this protein is 2-C-methyl-D-erythritol 2,4-cyclodiphosphate synthase.